Consider the following 462-residue polypeptide: A-type ATP synthase subunit B (462 aa).

This sequence belongs to the ATPase alpha/beta chains family. As to quaternary structure, has multiple subunits with at least A(3), B(3), C, D, E, F, H, I and proteolipid K(x).

The protein localises to the cell membrane. Component of the A-type ATP synthase that produces ATP from ADP in the presence of a proton gradient across the membrane. The B chain is a regulatory subunit. This chain is A-type ATP synthase subunit B, found in Methanobrevibacter smithii (strain ATCC 35061 / DSM 861 / OCM 144 / PS).